The following is a 148-amino-acid chain: NADPH-dependent 7-cyano-7-deazaguanine reductase (148 aa).

Residue C50 is the Thioimide intermediate of the active site. The active-site Proton donor is the D57. Substrate-binding positions include 72-74 (VES) and 91-92 (HE).

The protein belongs to the GTP cyclohydrolase I family. QueF type 1 subfamily.

It localises to the cytoplasm. It catalyses the reaction 7-aminomethyl-7-carbaguanine + 2 NADP(+) = 7-cyano-7-deazaguanine + 2 NADPH + 3 H(+). The protein operates within tRNA modification; tRNA-queuosine biosynthesis. Its function is as follows. Catalyzes the NADPH-dependent reduction of 7-cyano-7-deazaguanine (preQ0) to 7-aminomethyl-7-deazaguanine (preQ1). The chain is NADPH-dependent 7-cyano-7-deazaguanine reductase from Helicobacter pylori (strain ATCC 700392 / 26695) (Campylobacter pylori).